Here is a 586-residue protein sequence, read N- to C-terminus: Phosphomethylpyrimidine synthase (586 aa).

Residues 1-59 (MKQSVSAEQIELKSSLPGSKKVYVDGPREGMKVPMREIEQSDTNGVPNPPIRVYDTSGP) form a disordered region. Basic and acidic residues predominate over residues 22 to 39 (VYVDGPREGMKVPMREIE). Substrate is bound by residues Asn-193, Met-222, Tyr-251, His-287, 307–309 (SRG), 348–351 (DGLR), and Glu-387. His-391 is a Zn(2+) binding site. Position 414 (Tyr-414) interacts with substrate. Residue His-455 coordinates Zn(2+). Residues Cys-535, Cys-538, and Cys-543 each contribute to the [4Fe-4S] cluster site.

The protein belongs to the ThiC family. Requires [4Fe-4S] cluster as cofactor.

The enzyme catalyses 5-amino-1-(5-phospho-beta-D-ribosyl)imidazole + S-adenosyl-L-methionine = 4-amino-2-methyl-5-(phosphooxymethyl)pyrimidine + CO + 5'-deoxyadenosine + formate + L-methionine + 3 H(+). It participates in cofactor biosynthesis; thiamine diphosphate biosynthesis. Catalyzes the synthesis of the hydroxymethylpyrimidine phosphate (HMP-P) moiety of thiamine from aminoimidazole ribotide (AIR) in a radical S-adenosyl-L-methionine (SAM)-dependent reaction. The sequence is that of Phosphomethylpyrimidine synthase from Bacillus cereus (strain Q1).